The primary structure comprises 238 residues: Sarcospan (238 aa).

The segment at 1–33 (MGKDRQPRGQQRQGDAAGPDDPGPKKGAGTREQ) is disordered. The Extracellular portion of the chain corresponds to 1 to 48 (MGKDRQPRGQQRQGDAAGPDDPGPKKGAGTREQRGEEEAQTCCGCRFP). Residues 8–20 (RGQQRQGDAAGPD) show a composition bias toward low complexity. The chain crosses the membrane as a helical span at residues 49-69 (LLLALLQLALGVAVTVVGFLM). Over 70–81 (ASVSSSLLVRAT) the chain is Cytoplasmic. Residues 82–102 (PYWAGIIVCVVAYLGLFMLCV) form a helical membrane-spanning segment. The Cytoplasmic portion of the chain corresponds to 103-117 (SYQVDERTCIQFSMK). A helical transmembrane segment spans residues 118–138 (LLYFVLSALGLVVCVLAVAFA). The Extracellular segment spans residues 139–188 (AHHYSLLTHLTCENAPDSCQCKLPSSEPLSRTFVYRDVTDCTSITGTFQV). A helical membrane pass occupies residues 189 to 209 (FLLVQMVLNLVCGLVCLVACF). The Cytoplasmic segment spans residues 210–238 (VMWKHRYQVFYVGVRMCPLSASEGQQQKV).

The protein localises to the cell membrane. It is found in the sarcolemma. Its subcellular location is the postsynaptic cell membrane. In terms of biological role, component of the dystrophin-glycoprotein complex (DGC), a complex that spans the muscle plasma membrane and forms a link between the F-actin cytoskeleton and the extracellular matrix. Preferentially associates with the sarcoglycan subcomplex of the DGC. The protein is Sarcospan (SSPN) of Oryctolagus cuniculus (Rabbit).